A 303-amino-acid polypeptide reads, in one-letter code: Methyltransferase ktnA (303 aa).

This sequence belongs to the class I-like SAM-binding methyltransferase superfamily. Requires S-adenosyl-L-methionine as cofactor.

Functionally, non-reducing polyketide synthase; part of the gene cluster that mediates the biosynthesis of the bicoumarin kotanin. The non-reducing polyketide synthase ktnS first catalyzes the formation of the pentaketidic 4,7-dihydroxy-5-methylcoumarin from acetyl coenzyme A and 4 malonyl coenzyme A molecules. Further O-methylation by ktnB leads to the formation of 7-demethylsiderin. Then, an oxidative phenol coupling catalyzed by the cytochrome P450 monooxygenase ktnC forms the 8,8'-dimer P-orlandin via dimerization the monomeric precursor, 7-demethylsiderin. P-orlandin is subsequently O-methylated in a stepwise fashion to demethylkotanin and kotanin. The function of ktnA within the pathway has not been determined yet. This chain is Methyltransferase ktnA, found in Aspergillus niger (strain ATCC MYA-4892 / CBS 513.88 / FGSC A1513).